The chain runs to 142 residues: Hemoglobin subunit beta-C (142 aa).

The Globin domain maps to 2-142; sequence PNKALITGFW…VASALAHRYH (141 aa). Heme b is bound by residues histidine 59 and histidine 88.

It belongs to the globin family. In terms of assembly, heterotetramer of two alpha chains and two beta chains. Red blood cells.

Functionally, involved in oxygen transport from the lung to the various peripheral tissues. The sequence is that of Hemoglobin subunit beta-C (HBBC) from Ovis aries (Sheep).